The following is a 451-amino-acid chain: uncharacterized protein (451 aa).

Mn(2+) contacts are provided by Asp305, Asp316, His384, Glu414, and Glu428.

Belongs to the peptidase M24B family. Requires Mn(2+) as cofactor.

This is an uncharacterized protein from Schizosaccharomyces pombe (strain 972 / ATCC 24843) (Fission yeast).